Consider the following 134-residue polypeptide: Profilin-2 (134 aa).

Residues Cys13 and Cys118 are joined by a disulfide bond. The short motif at 84-100 (AVIRGKKGSGGITIKET) is the Involved in PIP2 interaction element. Phosphothreonine is present on Thr114.

Belongs to the profilin family. Occurs in many kinds of cells as a complex with monomeric actin in a 1:1 ratio. In terms of processing, phosphorylated by MAP kinases.

It is found in the cytoplasm. It localises to the cytoskeleton. Functionally, binds to actin and affects the structure of the cytoskeleton. At high concentrations, profilin prevents the polymerization of actin, whereas it enhances it at low concentrations. The sequence is that of Profilin-2 from Olea europaea (Common olive).